Reading from the N-terminus, the 931-residue chain is Transportin (931 aa).

HEAT repeat units follow at residues 10-37, 42-79, 88-121, 127-164, 171-201, 214-241, 253-280, 296-421, 430-459, 471-498, 512-545, 553-586, 594-632, 640-693, 704-735, 743-776, 784-819, 827-860, and 869-900; these read GLKQ…EELD, VPDY…QYFE, YIKR…KSCF, LLPA…LDSD, NQLI…YFII, FLKG…VTLV, KDVI…FWTA, PVLV…LSGI, VTLP…GAIA, SKVI…TLSR, LHPL…EEEA, LQMI…AKVV, ELIN…SSIG, SLFF…GIGT, LPHL…KFCL, PDYL…IRMP, VAIR…IVSP, DKFI…INNN, and VYIC…KTSM. Residues 32–99 enclose the Importin N-terminal domain; it reads IREELDKFHS…KREILPVLSD (68 aa). Residues 317-401 are disordered; that stretch reads DQGDDSMTPD…DDDDDDDGFE (85 aa). Low complexity predominate over residues 358–381; sequence DNNNNSNNNNSSNNNSSNNNNNNN. The segment covering 382 to 401 has biased composition (acidic residues); it reads NEDDEEYNDDDDDDDDDGFE.

It belongs to the importin beta family. Importin beta-2 subfamily. Forms a complex with an importin alpha subunit.

The protein localises to the cytoplasm. It is found in the nucleus envelope. Its function is as follows. Functions in nuclear protein import via a substrate-importin alpha-beta transport complex that passes though the nuclear pore complexes (NPC). Mediates docking of the substrate-importin complex to distinct nucleoporins. In Dictyostelium discoideum (Social amoeba), this protein is Transportin (tnpo).